The chain runs to 231 residues: Lecithin retinol acyltransferase (231 aa).

The Cytoplasmic segment spans residues Met-1–Ser-194. The 128-residue stretch at Val-50–Gln-177 folds into the LRAT domain. Active-site residues include His-60 and His-72. The Acyl-thioester intermediate role is filled by Cys-161. Residues Ser-195–Met-215 traverse the membrane as a helical segment. At Thr-216–Gly-231 the chain is on the lumenal side.

Belongs to the H-rev107 family. Hepatic stellate cells and endothelial cells (at protein level).

The protein resides in the endoplasmic reticulum membrane. The protein localises to the rough endoplasmic reticulum. Its subcellular location is the endosome. It localises to the multivesicular body. It is found in the cytoplasm. The protein resides in the perinuclear region. It carries out the reaction all-trans-retinol--[retinol-binding protein] + a 1,2-diacyl-sn-glycero-3-phosphocholine = apo--[retinol-binding protein] + an all-trans-retinyl ester + a 2-acyl-sn-glycero-3-phosphocholine. The catalysed reaction is 1,2-diheptanoyl-sn-glycero-3-phosphocholine + all-trans-retinol--[retinol-binding protein] = all-trans-retinyl heptanoate + 2-heptanoyl-sn-glycero-3-phosphocholine + apo--[retinol-binding protein]. It catalyses the reaction 1,2-dioctanoyl-sn-glycero-3-phosphocholine + all-trans-retinol--[retinol-binding protein] = 2-octanoyl-sn-glycero-3-phosphocholine + all-trans-retinyl octanoate + apo--[retinol-binding protein]. The enzyme catalyses all-trans-retinol--[retinol-binding protein] + 1,2-dihexadecanoyl-sn-glycero-3-phosphocholine = apo--[retinol-binding protein] + all-trans-retinyl hexadecanoate + 2-hexadecanoyl-sn-glycero-3-phosphocholine. It carries out the reaction 1,2-didodecanoyl-sn-glycero-3-phosphocholine + all-trans-retinol--[retinol-binding protein] = 2-dodecanoyl-sn-glycero-3-phosphocholine + all-trans-retinyl dodecanoate + apo--[retinol-binding protein]. The catalysed reaction is 1,2-dihexadecanoyl-sn-glycero-3-phosphocholine + all-trans-retinol = all-trans-retinyl hexadecanoate + 2-hexadecanoyl-sn-glycero-3-phosphocholine. Its pathway is cofactor metabolism; retinol metabolism. Its activity is regulated as follows. Inhibited by all-trans-retinyl alpha-bromoacetate and N-boc-L-biocytinyl-11-aminoundecane chloro-methyl ketone (BACMK). In terms of biological role, transfers the acyl group from the sn-1 position of phosphatidylcholine to all-trans retinol, producing all-trans retinyl esters. Retinyl esters are storage forms of vitamin A. LRAT plays a critical role in vision. It provides the all-trans retinyl ester substrates for the isomerohydrolase which processes the esters into 11-cis-retinol in the retinal pigment epithelium; due to a membrane-associated alcohol dehydrogenase, 11 cis-retinol is oxidized and converted into 11-cis-retinaldehyde which is the chromophore for rhodopsin and the cone photopigments. Required for the survival of cone photoreceptors and correct rod photoreceptor cell morphology. The protein is Lecithin retinol acyltransferase (Lrat) of Mus musculus (Mouse).